Reading from the N-terminus, the 471-residue chain is Glutamate--tRNA ligase (471 aa).

Positions 9-19 match the 'HIGH' region motif; sequence PSPTGYLHVGG. Zn(2+)-binding residues include Cys-98, Cys-100, Cys-125, and His-127. The short motif at 237-241 is the 'KMSKS' region element; the sequence is KLSKR. Lys-240 serves as a coordination point for ATP.

Belongs to the class-I aminoacyl-tRNA synthetase family. Glutamate--tRNA ligase type 1 subfamily. As to quaternary structure, monomer. Zn(2+) serves as cofactor.

It localises to the cytoplasm. It catalyses the reaction tRNA(Glu) + L-glutamate + ATP = L-glutamyl-tRNA(Glu) + AMP + diphosphate. Functionally, catalyzes the attachment of glutamate to tRNA(Glu) in a two-step reaction: glutamate is first activated by ATP to form Glu-AMP and then transferred to the acceptor end of tRNA(Glu). This is Glutamate--tRNA ligase from Escherichia coli O9:H4 (strain HS).